The following is a 107-amino-acid chain: Protein RnfH (107 aa).

The tract at residues 82–107 (ARRKRAEKAKEEGRANKVTGGRPIER) is disordered.

The protein belongs to the UPF0125 (RnfH) family.

In Pseudoalteromonas translucida (strain TAC 125), this protein is Protein RnfH.